The following is a 505-amino-acid chain: Cytochrome P450 2K6 (505 aa).

A helical membrane pass occupies residues 7–27; it reads FLLQGSPTGTILGALLLFLVI. Residue Cys-448 participates in heme binding.

The protein belongs to the cytochrome P450 family. Requires heme as cofactor. As to expression, detected in liver and ovary.

Its subcellular location is the endoplasmic reticulum membrane. It localises to the microsome membrane. Its function is as follows. Metabolizes aflatoxin B1 (AFB1) to the cytotoxic derivative AFB1 exo-8,9-epoxide. Does not show activity towards lauric acid. The sequence is that of Cytochrome P450 2K6 from Danio rerio (Zebrafish).